The chain runs to 354 residues: Fructose-bisphosphate aldolase (354 aa).

Ser50 contributes to the D-glyceraldehyde 3-phosphate binding site. Asp83 (proton donor) is an active-site residue. Residues His84, Asp105, Glu142, and His198 each coordinate Zn(2+). Gly199 provides a ligand contact to dihydroxyacetone phosphate. His232 provides a ligand contact to Zn(2+). Residues 233-235 and 275-278 each bind dihydroxyacetone phosphate; these read GSS and NIDT.

This sequence belongs to the class II fructose-bisphosphate aldolase family. Homodimer. Zn(2+) is required as a cofactor.

It carries out the reaction beta-D-fructose 1,6-bisphosphate = D-glyceraldehyde 3-phosphate + dihydroxyacetone phosphate. The protein operates within carbohydrate biosynthesis; Calvin cycle. It participates in carbohydrate degradation; glycolysis; D-glyceraldehyde 3-phosphate and glycerone phosphate from D-glucose: step 4/4. Activity is stimulated by Fe(2+) in autotrophically grown cells. Functionally, catalyzes the aldol condensation of dihydroxyacetone phosphate (DHAP or glycerone-phosphate) with glyceraldehyde 3-phosphate (G3P) to form fructose 1,6-bisphosphate (FBP) in gluconeogenesis and the reverse reaction in glycolysis. The protein is Fructose-bisphosphate aldolase of Xanthobacter flavus.